The primary structure comprises 283 residues: Phosphate import ATP-binding protein PstB 1 (283 aa).

Residues 1 to 16 show a composition bias toward acidic residues; sequence MSSDDTTDPTADDESF. Residues 1–35 form a disordered region; that stretch reads MSSDDTTDPTADDESFTDSPVAGLEQSTTTRGSGR. The ABC transporter domain maps to 38-278; sequence ISARNINVWY…PSSERVENYI (241 aa). 70–77 contributes to the ATP binding site; sequence GPSGCGKS.

The protein belongs to the ABC transporter superfamily. Phosphate importer (TC 3.A.1.7) family. As to quaternary structure, the complex is composed of two ATP-binding proteins (PstB), two transmembrane proteins (PstC and PstA) and a solute-binding protein (PstS).

It localises to the cell membrane. The catalysed reaction is phosphate(out) + ATP + H2O = ADP + 2 phosphate(in) + H(+). Functionally, part of the ABC transporter complex PstSACB involved in phosphate import. Responsible for energy coupling to the transport system. This chain is Phosphate import ATP-binding protein PstB 1, found in Natronomonas pharaonis (strain ATCC 35678 / DSM 2160 / CIP 103997 / JCM 8858 / NBRC 14720 / NCIMB 2260 / Gabara) (Halobacterium pharaonis).